Here is an 89-residue protein sequence, read N- to C-terminus: Small ribosomal subunit protein uS15 (89 aa).

It belongs to the universal ribosomal protein uS15 family. In terms of assembly, part of the 30S ribosomal subunit. Forms a bridge to the 50S subunit in the 70S ribosome, contacting the 23S rRNA.

In terms of biological role, one of the primary rRNA binding proteins, it binds directly to 16S rRNA where it helps nucleate assembly of the platform of the 30S subunit by binding and bridging several RNA helices of the 16S rRNA. Functionally, forms an intersubunit bridge (bridge B4) with the 23S rRNA of the 50S subunit in the ribosome. This Streptococcus uberis (strain ATCC BAA-854 / 0140J) protein is Small ribosomal subunit protein uS15.